The sequence spans 159 residues: MADAVLFEFLHTEMVAELWAPDPDPGSGGKRRSLSVLEGLGFRVGQALGERLPLETPAFREELDALKFLCRDLWAAMFQKHMDGLRTNHQGTYVLQDNSFPLLVTMGSGPQYLEEAPKFLAFTCGLLCGALHTLGFQSLVTASVASLPACKFQVVIQKS.

S33 carries the phosphoserine modification.

It belongs to the TRAPP small subunits family. BET3 subfamily. In terms of assembly, part of the multisubunit transport protein particle (TRAPP) complex. Heterodimer with TRAPPC3. The heterodimer TRAPPC3-TRAPPC6A interacts with TRAPPC2L. Interacts with TRAPPC2L. As to expression, ubiquitous, with lowest expression in skeletal muscle and brain and highest in kidney, liver and testis, as well as in cultured melanocytes.

Its subcellular location is the golgi apparatus. It localises to the cis-Golgi network. The protein localises to the endoplasmic reticulum. Its function is as follows. May play a role in vesicular transport during the biogenesis of melanosomes. The protein is Trafficking protein particle complex subunit 6A of Mus musculus (Mouse).